A 243-amino-acid chain; its full sequence is Ribosomal RNA small subunit methyltransferase G (243 aa).

S-adenosyl-L-methionine is bound by residues Gly-80, Phe-85, 132 to 133, and Arg-151; that span reads IE.

It belongs to the methyltransferase superfamily. RNA methyltransferase RsmG family.

It is found in the cytoplasm. Its function is as follows. Specifically methylates the N7 position of a guanine in 16S rRNA. The sequence is that of Ribosomal RNA small subunit methyltransferase G from Synechococcus sp. (strain CC9902).